The sequence spans 265 residues: Mlc titration factor A (265 aa).

Positions 111, 148, 152, and 211 each coordinate Zn(2+).

The protein belongs to the MtfA family. Interacts with Mlc. The cofactor is Zn(2+).

The protein resides in the cytoplasm. Involved in the modulation of the activity of the glucose-phosphotransferase system (glucose-PTS). Interacts with the transcriptional repressor Mlc, preventing its interaction with DNA and leading to the modulation of expression of genes regulated by Mlc, including ptsG, which encodes the PTS system glucose-specific EIICB component. In terms of biological role, shows zinc-dependent metallopeptidase activity. In Salmonella agona (strain SL483), this protein is Mlc titration factor A.